Consider the following 449-residue polypeptide: NADP-specific glutamate dehydrogenase (449 aa).

Substrate is bound by residues lysine 92, glutamine 113, and lysine 116. Lysine 128 acts as the Proton donor in catalysis. Glycine 167 provides a ligand contact to substrate. Residues threonine 211 and asparagine 242 each coordinate NADP(+). Serine 380 serves as a coordination point for substrate.

It belongs to the Glu/Leu/Phe/Val dehydrogenases family. Homohexamer.

The catalysed reaction is L-glutamate + NADP(+) + H2O = 2-oxoglutarate + NH4(+) + NADPH + H(+). In terms of biological role, catalyzes the reversible oxidative deamination of glutamate to alpha-ketoglutarate and ammonia. The polypeptide is NADP-specific glutamate dehydrogenase (gdhA) (Haemophilus influenzae (strain ATCC 51907 / DSM 11121 / KW20 / Rd)).